The primary structure comprises 313 residues: tRNA(Ile)-lysidine synthase (313 aa).

37-42 serves as a coordination point for ATP; the sequence is SGGPDS.

The protein belongs to the tRNA(Ile)-lysidine synthase family.

The protein resides in the cytoplasm. The enzyme catalyses cytidine(34) in tRNA(Ile2) + L-lysine + ATP = lysidine(34) in tRNA(Ile2) + AMP + diphosphate + H(+). Its function is as follows. Ligates lysine onto the cytidine present at position 34 of the AUA codon-specific tRNA(Ile) that contains the anticodon CAU, in an ATP-dependent manner. Cytidine is converted to lysidine, thus changing the amino acid specificity of the tRNA from methionine to isoleucine. In Corynebacterium efficiens (strain DSM 44549 / YS-314 / AJ 12310 / JCM 11189 / NBRC 100395), this protein is tRNA(Ile)-lysidine synthase.